Reading from the N-terminus, the 635-residue chain is Threonine--tRNA ligase (635 aa).

Positions 1–61 constitute a TGS domain; that stretch reads MIKITLKDGS…ENDCTLNLLT (61 aa). Residues 242 to 532 form a catalytic region; that stretch reads DHRKLGRELD…LTEHYAGAFP (291 aa). 3 residues coordinate Zn(2+): C333, H384, and H509.

The protein belongs to the class-II aminoacyl-tRNA synthetase family. As to quaternary structure, homodimer. It depends on Zn(2+) as a cofactor.

The protein localises to the cytoplasm. The catalysed reaction is tRNA(Thr) + L-threonine + ATP = L-threonyl-tRNA(Thr) + AMP + diphosphate + H(+). Functionally, catalyzes the attachment of threonine to tRNA(Thr) in a two-step reaction: L-threonine is first activated by ATP to form Thr-AMP and then transferred to the acceptor end of tRNA(Thr). Also edits incorrectly charged L-seryl-tRNA(Thr). In Acetivibrio thermocellus (strain ATCC 27405 / DSM 1237 / JCM 9322 / NBRC 103400 / NCIMB 10682 / NRRL B-4536 / VPI 7372) (Clostridium thermocellum), this protein is Threonine--tRNA ligase.